We begin with the raw amino-acid sequence, 463 residues long: uncharacterized protein (463 aa).

This sequence belongs to the UbiD family.

This is an uncharacterized protein from Rhodospirillum rubrum.